The following is a 913-amino-acid chain: DNA polymerase (913 aa).

Positions 182-401 (PLIIASWDIE…AYARKDTDLP (220 aa)) are contains conserved residues essential for 3' -&gt; 5' exonuclease activities.

This sequence belongs to the DNA polymerase type-B family.

It catalyses the reaction DNA(n) + a 2'-deoxyribonucleoside 5'-triphosphate = DNA(n+1) + diphosphate. In terms of biological role, in addition to polymerase activity, this DNA polymerase potentially exhibits 3' to 5' exonuclease activity. This chain is DNA polymerase (DPO), found in Chlorella (PBCV-NY2A).